The following is a 201-amino-acid chain: MQAFTAHSGLAVAIDSANIDTDQIIPKQFLSKVTRDGFGVHLFHDWRYLDDAGEKPNPEFVLNQSRYKGASILLAQENFGCGSSREHAPWALADFGLRVVIAPSFADIFYGNAINNGLLPVVLTQAQVQQLMDEVQGELGAQVSVDLQLLRVISPSGAEFPFSLVESARHKLLNGLDAVGETLTHGQAISAYEANIPAWLA.

This sequence belongs to the LeuD family. LeuD type 1 subfamily. In terms of assembly, heterodimer of LeuC and LeuD.

It catalyses the reaction (2R,3S)-3-isopropylmalate = (2S)-2-isopropylmalate. Its pathway is amino-acid biosynthesis; L-leucine biosynthesis; L-leucine from 3-methyl-2-oxobutanoate: step 2/4. In terms of biological role, catalyzes the isomerization between 2-isopropylmalate and 3-isopropylmalate, via the formation of 2-isopropylmaleate. This chain is 3-isopropylmalate dehydratase small subunit, found in Shewanella denitrificans (strain OS217 / ATCC BAA-1090 / DSM 15013).